We begin with the raw amino-acid sequence, 902 residues long: Auxin response factor 5 (902 aa).

Residues 158–260 (FCKTLTASDT…QLMVGVRRAN (103 aa)) constitute a DNA-binding region (TF-B3). The segment at 497-543 (SEMVQPQNKLTVNPSASNTSGQEQNLSQSMSAPAKPENSTLSGCSSG) is disordered. Positions 793 to 877 (RTYTKVQKTG…RCIRILSPTE (85 aa)) constitute a PB1 domain.

This sequence belongs to the ARF family. In terms of assembly, homodimers and heterodimers. Interacts with BRX and the auxin-responsive proteins IAA1, IAA12 (BODENLOS), IAA17 and ARF7. Expressed in the whole plant with a lower expression in leaves. Detected in embryo axis, provascular tissues, procambium and some differentiated vascular regions of mature organs.

Its subcellular location is the nucleus. Its function is as follows. Auxin response factors (ARFs) are transcriptional factors that bind specifically to the DNA sequence 5'-TGTCTC-3' found in the auxin-responsive promoter elements (AuxREs). Seems to act as transcriptional activator. Formation of heterodimers with Aux/IAA proteins may alter their ability to modulate early auxin response genes expression. Mediates embryo axis formation and vascular tissues differentiation. Functionally redundant with ARF7. May be necessary to counteract AMP1 activity. This Arabidopsis thaliana (Mouse-ear cress) protein is Auxin response factor 5 (ARF5).